Consider the following 437-residue polypeptide: Enolase 2 (437 aa).

Residue Lys-60 forms a Glycyl lysine isopeptide (Lys-Gly) (interchain with G-Cter in ubiquitin) linkage. Phosphoserine is present on Ser-138. The active site involves His-160. The residue at position 188 (Ser-188) is a Phosphoserine. Lys-243 participates in a covalent cross-link: Glycyl lysine isopeptide (Lys-Gly) (interchain with G-Cter in ubiquitin). Residues Asp-247 and Glu-296 each coordinate Mg(2+). Phosphothreonine is present on Thr-313. Asp-321 contacts Mg(2+). Thr-324 carries the phosphothreonine modification. Lys-358 is covalently cross-linked (Glycyl lysine isopeptide (Lys-Gly) (interchain with G-Cter in ubiquitin)).

This sequence belongs to the enolase family. As to quaternary structure, homodimer. Mg(2+) is required as a cofactor.

It is found in the cytoplasm. The enzyme catalyses (2R)-2-phosphoglycerate = phosphoenolpyruvate + H2O. Its pathway is carbohydrate degradation; glycolysis; pyruvate from D-glyceraldehyde 3-phosphate: step 4/5. The chain is Enolase 2 (ENO2) from Saccharomyces cerevisiae (strain ATCC 204508 / S288c) (Baker's yeast).